Consider the following 80-residue polypeptide: Large ribosomal subunit protein bL31 (80 aa).

Residues Cys16, Cys18, Cys38, and Cys41 each contribute to the Zn(2+) site.

The protein belongs to the bacterial ribosomal protein bL31 family. Type A subfamily. Part of the 50S ribosomal subunit. It depends on Zn(2+) as a cofactor.

Functionally, binds the 23S rRNA. In Mycobacterium bovis (strain ATCC BAA-935 / AF2122/97), this protein is Large ribosomal subunit protein bL31.